Reading from the N-terminus, the 356-residue chain is Uroporphyrinogen decarboxylase (356 aa).

Residues 27-31, Asp-77, Tyr-154, Thr-209, and His-327 each bind substrate; that span reads RQAGR.

This sequence belongs to the uroporphyrinogen decarboxylase family. As to quaternary structure, homodimer.

The protein localises to the cytoplasm. It carries out the reaction uroporphyrinogen III + 4 H(+) = coproporphyrinogen III + 4 CO2. It functions in the pathway porphyrin-containing compound metabolism; protoporphyrin-IX biosynthesis; coproporphyrinogen-III from 5-aminolevulinate: step 4/4. Its function is as follows. Catalyzes the decarboxylation of four acetate groups of uroporphyrinogen-III to yield coproporphyrinogen-III. The polypeptide is Uroporphyrinogen decarboxylase (Hamiltonella defensa subsp. Acyrthosiphon pisum (strain 5AT)).